We begin with the raw amino-acid sequence, 122 residues long: Serum amyloid A-3 protein (122 aa).

An N-terminal signal peptide occupies residues methionine 1–serine 18. The tract at residues glycine 88 to tyrosine 122 is disordered. Over residues glutamate 99–aspartate 109 the composition is skewed to polar residues.

The protein belongs to the SAA family. As to expression, expressed by the liver; secreted in plasma. Expressed in synovial fibroblasts.

The protein localises to the secreted. Major acute phase reactant. Apolipoprotein of the HDL complex. In vitro exhibits antimicrobial activity against Escherichia coli, Streptococcus uberis and Pseudomonas aeruginosa. This chain is Serum amyloid A-3 protein (SAA3), found in Oryctolagus cuniculus (Rabbit).